The sequence spans 444 residues: MLDGLRDAVRKFLGSSDYEKAVNEFIKELQIILIKADVNVRLVKDLTDRIKKRITEEKPPSAIEKREWFISIVYDELSRLFGGDKEPEVMPKKLPYIIMLVGVQGSGKTTTSGKLALFYKKKGYKVGLVAADIYRPAAYEQLIQIGQQINIPVYGEPGNKNPIEIATNGLEKFLKEKMNIVIIDTAGRHGYGEEASLLEEMKSMYDKIHPDEVILVIDASIGQKAYDLASRFHQASPIGSLIVSKMDGTAKGGGALSAVIATGAQIKFIGTGEKLDELEVFNPRRFVSRLLGLGDIESIIEKIKSVEDYENLEKRMEDVISGKTKLTLRDIYKQLIALRKMGPLGKIFQMLPGAGILSQVPEEQLKLGEEKIRTFMAIMNSMTYKELDNPSIIDKARMRRIAKGAGVTVEEVKELLKQYQMTNNLLKMVKRRKGLAKLFGGSNQ.

GTP contacts are provided by residues 102–109 (GVQGSGKT), 184–188 (DTAGR), and 244–247 (SKMD).

This sequence belongs to the GTP-binding SRP family. SRP54 subfamily. As to quaternary structure, part of the signal recognition particle protein translocation system, which is composed of SRP and FtsY. Archaeal SRP consists of a 7S RNA molecule of 300 nucleotides and two protein subunits: SRP54 and SRP19.

It is found in the cytoplasm. The enzyme catalyses GTP + H2O = GDP + phosphate + H(+). In terms of biological role, involved in targeting and insertion of nascent membrane proteins into the cytoplasmic membrane. Binds to the hydrophobic signal sequence of the ribosome-nascent chain (RNC) as it emerges from the ribosomes. The SRP-RNC complex is then targeted to the cytoplasmic membrane where it interacts with the SRP receptor FtsY. The polypeptide is Signal recognition particle 54 kDa protein (Sulfolobus acidocaldarius (strain ATCC 33909 / DSM 639 / JCM 8929 / NBRC 15157 / NCIMB 11770)).